We begin with the raw amino-acid sequence, 329 residues long: Ribonucleoside-diphosphate reductase small chain (329 aa).

Residues D75, E106, and H109 each coordinate Fe cation. The active site involves Y113. 3 residues coordinate Fe cation: E168, E202, and H205.

Belongs to the ribonucleoside diphosphate reductase small chain family. Heterodimer of a large and a small chain. It depends on Fe cation as a cofactor.

The protein resides in the cytoplasm. The enzyme catalyses a 2'-deoxyribonucleoside 5'-diphosphate + [thioredoxin]-disulfide + H2O = a ribonucleoside 5'-diphosphate + [thioredoxin]-dithiol. In terms of biological role, provides the precursors necessary for DNA synthesis. Catalyzes the biosynthesis of deoxyribonucleotides from the corresponding ribonucleotides. This Nicotiana tabacum (Common tobacco) protein is Ribonucleoside-diphosphate reductase small chain.